We begin with the raw amino-acid sequence, 270 residues long: MTLKIGIVGAGGRMGRQLIQAVYHTEGVELGAAFERVGSSLVGTDAGELAGVGKLGIKVSDNLTQEKDNFDLLVDFTRPEGTLQHLAFCVEHHKNIVIGTTGFDDQSKQAIQQAAQNIAIVFASNYSVGVNLVFKLLKKAAKVMGDYCDIEIIEAHHRHKVDAPSGTALSMGEHIAKTLGRDLKTHGVFSREGITGERKPDEIGFSTIRAADVVGEHTVWFADIGERVEISHKASSRMTFANGAVRAAKWLSTKQEGLFDMTDVLDLNNL.

NAD(+) contacts are provided by residues 9 to 14 and Glu35; that span reads GAGGRM. Position 36 (Arg36) interacts with NADP(+). Residues 99–101 and 123–126 each bind NAD(+); these read GTT and ASNY. His156 acts as the Proton donor/acceptor in catalysis. His157 is a (S)-2,3,4,5-tetrahydrodipicolinate binding site. Lys160 serves as the catalytic Proton donor. Position 166–167 (166–167) interacts with (S)-2,3,4,5-tetrahydrodipicolinate; it reads GT.

The protein belongs to the DapB family.

It localises to the cytoplasm. The enzyme catalyses (S)-2,3,4,5-tetrahydrodipicolinate + NAD(+) + H2O = (2S,4S)-4-hydroxy-2,3,4,5-tetrahydrodipicolinate + NADH + H(+). It catalyses the reaction (S)-2,3,4,5-tetrahydrodipicolinate + NADP(+) + H2O = (2S,4S)-4-hydroxy-2,3,4,5-tetrahydrodipicolinate + NADPH + H(+). The protein operates within amino-acid biosynthesis; L-lysine biosynthesis via DAP pathway; (S)-tetrahydrodipicolinate from L-aspartate: step 4/4. Functionally, catalyzes the conversion of 4-hydroxy-tetrahydrodipicolinate (HTPA) to tetrahydrodipicolinate. This Histophilus somni (strain 129Pt) (Haemophilus somnus) protein is 4-hydroxy-tetrahydrodipicolinate reductase.